Consider the following 339-residue polypeptide: Protein RecA (339 aa).

74–81 (GPESSGKT) contributes to the ATP binding site.

The protein belongs to the RecA family.

It is found in the cytoplasm. Can catalyze the hydrolysis of ATP in the presence of single-stranded DNA, the ATP-dependent uptake of single-stranded DNA by duplex DNA, and the ATP-dependent hybridization of homologous single-stranded DNAs. It interacts with LexA causing its activation and leading to its autocatalytic cleavage. This chain is Protein RecA, found in Phytoplasma mali (strain AT).